The following is a 79-amino-acid chain: Ferredoxin (79 aa).

4Fe-4S ferredoxin-type domains are found at residues 2-30 and 31-60; these read PHVI…YDGG and DQFY…PEED. 2 residues coordinate [3Fe-4S] cluster: Cys9 and Cys17. [4Fe-4S] cluster-binding residues include Cys21, Cys40, Cys43, and Cys46. Cys50 contributes to the [3Fe-4S] cluster binding site.

The cofactor is [4Fe-4S] cluster. [3Fe-4S] cluster is required as a cofactor.

Functionally, ferredoxins are iron-sulfur proteins that transfer electrons in a wide variety of metabolic reactions. The polypeptide is Ferredoxin (Thermus thermophilus (strain ATCC 27634 / DSM 579 / HB8)).